We begin with the raw amino-acid sequence, 235 residues long: Ribonuclease PH (235 aa).

Residues Arg86 and Gly124 to Arg126 contribute to the phosphate site.

It belongs to the RNase PH family. In terms of assembly, homohexameric ring arranged as a trimer of dimers.

The catalysed reaction is tRNA(n+1) + phosphate = tRNA(n) + a ribonucleoside 5'-diphosphate. Functionally, phosphorolytic 3'-5' exoribonuclease that plays an important role in tRNA 3'-end maturation. Removes nucleotide residues following the 3'-CCA terminus of tRNAs; can also add nucleotides to the ends of RNA molecules by using nucleoside diphosphates as substrates, but this may not be physiologically important. Probably plays a role in initiation of 16S rRNA degradation (leading to ribosome degradation) during starvation. The chain is Ribonuclease PH from Francisella tularensis subsp. holarctica (strain FTNF002-00 / FTA).